Reading from the N-terminus, the 548-residue chain is Chaperonin GroEL 1 (548 aa).

ATP is bound by residues threonine 30–proline 33, lysine 51, aspartate 87–threonine 91, glycine 415, asparagine 479–alanine 481, and aspartate 495.

Belongs to the chaperonin (HSP60) family. As to quaternary structure, forms a cylinder of 14 subunits composed of two heptameric rings stacked back-to-back. Interacts with the co-chaperonin GroES.

It is found in the cytoplasm. The catalysed reaction is ATP + H2O + a folded polypeptide = ADP + phosphate + an unfolded polypeptide.. Functionally, together with its co-chaperonin GroES, plays an essential role in assisting protein folding. The GroEL-GroES system forms a nano-cage that allows encapsulation of the non-native substrate proteins and provides a physical environment optimized to promote and accelerate protein folding. The polypeptide is Chaperonin GroEL 1 (Escherichia coli O1:K1 / APEC).